Reading from the N-terminus, the 337-residue chain is Phenylalanine--tRNA ligase alpha subunit (337 aa).

Position 252 (E252) interacts with Mg(2+).

Belongs to the class-II aminoacyl-tRNA synthetase family. Phe-tRNA synthetase alpha subunit type 1 subfamily. As to quaternary structure, tetramer of two alpha and two beta subunits. It depends on Mg(2+) as a cofactor.

The protein resides in the cytoplasm. The catalysed reaction is tRNA(Phe) + L-phenylalanine + ATP = L-phenylalanyl-tRNA(Phe) + AMP + diphosphate + H(+). The protein is Phenylalanine--tRNA ligase alpha subunit of Francisella tularensis subsp. tularensis (strain SCHU S4 / Schu 4).